We begin with the raw amino-acid sequence, 196 residues long: Holliday junction branch migration complex subunit RuvA (196 aa).

The segment at 1-63 (MLDFIKGEIV…EETHQLFGFI (63 aa)) is domain I. The domain II stretch occupies residues 64 to 142 (DKKERQLFTH…PDNIPSSDTI (79 aa)). The tract at residues 143 to 146 (ITNI) is flexible linker. Residues 146 to 196 (ISSNITKEAITALITLGFSQSASQKVVNKIVSNNSSSTTIEQIIKKALKLL) are domain III.

This sequence belongs to the RuvA family. Homotetramer. Forms an RuvA(8)-RuvB(12)-Holliday junction (HJ) complex. HJ DNA is sandwiched between 2 RuvA tetramers; dsDNA enters through RuvA and exits via RuvB. An RuvB hexamer assembles on each DNA strand where it exits the tetramer. Each RuvB hexamer is contacted by two RuvA subunits (via domain III) on 2 adjacent RuvB subunits; this complex drives branch migration. In the full resolvosome a probable DNA-RuvA(4)-RuvB(12)-RuvC(2) complex forms which resolves the HJ.

The protein resides in the cytoplasm. Its function is as follows. The RuvA-RuvB-RuvC complex processes Holliday junction (HJ) DNA during genetic recombination and DNA repair, while the RuvA-RuvB complex plays an important role in the rescue of blocked DNA replication forks via replication fork reversal (RFR). RuvA specifically binds to HJ cruciform DNA, conferring on it an open structure. The RuvB hexamer acts as an ATP-dependent pump, pulling dsDNA into and through the RuvAB complex. HJ branch migration allows RuvC to scan DNA until it finds its consensus sequence, where it cleaves and resolves the cruciform DNA. In Azobacteroides pseudotrichonymphae genomovar. CFP2, this protein is Holliday junction branch migration complex subunit RuvA.